An 810-amino-acid chain; its full sequence is Protein kinase C-binding protein NELL1 (810 aa).

Positions Met-1 to Gly-21 are cleaved as a signal peptide. Residues Asn-40, Asn-53, Asn-83, Asn-224, Asn-294, and Asn-372 are each glycosylated (N-linked (GlcNAc...) asparagine). The Laminin G-like domain occupies Ala-57–Cys-227. In terms of domain architecture, VWFC 1 spans Lys-271 to Arg-332. 3 disulfide bridges follow: Cys-395/Cys-407, Cys-401/Cys-416, and Cys-418/Cys-432. Ca(2+)-binding residues include Asp-434, Ile-435, and Glu-437. The region spanning Asp-434–Thr-475 is the EGF-like 1; calcium-binding domain. 15 disulfide bridges follow: Cys-438–Cys-451, Cys-445–Cys-460, Cys-462–Cys-474, Cys-480–Cys-493, Cys-487–Cys-502, Cys-504–Cys-515, Cys-519–Cys-529, Cys-523–Cys-535, Cys-537–Cys-546, Cys-553–Cys-566, Cys-560–Cys-575, Cys-577–Cys-594, Cys-600–Cys-613, Cys-607–Cys-622, and Cys-624–Cys-630. Residues Asn-453, Leu-454, and Leu-457 each contribute to the Ca(2+) site. The EGF-like 2; calcium-binding domain maps to Glu-476–Lys-516. Asn-511 carries N-linked (GlcNAc...) asparagine glycosylation. The region spanning Ala-517–Glu-547 is the EGF-like 3 domain. The 39-residue stretch at Asp-549–Tyr-587 folds into the EGF-like 4; calcium-binding domain. The N-linked (GlcNAc...) asparagine glycan is linked to Asn-562. The EGF-like 5; calcium-binding domain maps to Asp-596–Ser-631. A glycan (N-linked (GlcNAc...) asparagine) is linked at Asn-609. VWFC domains follow at residues Gly-632 to Asp-687 and Ser-692 to Val-750. The N-linked (GlcNAc...) asparagine glycan is linked to Asn-708.

In terms of assembly, homotrimer. Binds to PKC beta-1. Interacts with ATRAID; the interaction promotes osteoblast cell differentiation and mineralization. Interacts with ROBO3.

It localises to the cytoplasm. The protein resides in the nucleus envelope. Its subcellular location is the secreted. Plays a role in the control of cell growth and differentiation. Promotes osteoblast cell differentiation and terminal mineralization. The protein is Protein kinase C-binding protein NELL1 (Nell1) of Mus musculus (Mouse).